Reading from the N-terminus, the 1110-residue chain is Isoleucine--tRNA ligase (1110 aa).

Positions 47-57 (PSANGTPGIHH) match the 'HIGH' region motif. Positions 658 to 662 (KMSKR) match the 'KMSKS' region motif. Lys-661 contacts ATP.

It belongs to the class-I aminoacyl-tRNA synthetase family. IleS type 2 subfamily. In terms of assembly, monomer. It depends on Zn(2+) as a cofactor.

Its subcellular location is the cytoplasm. It catalyses the reaction tRNA(Ile) + L-isoleucine + ATP = L-isoleucyl-tRNA(Ile) + AMP + diphosphate. In terms of biological role, catalyzes the attachment of isoleucine to tRNA(Ile). As IleRS can inadvertently accommodate and process structurally similar amino acids such as valine, to avoid such errors it has two additional distinct tRNA(Ile)-dependent editing activities. One activity is designated as 'pretransfer' editing and involves the hydrolysis of activated Val-AMP. The other activity is designated 'posttransfer' editing and involves deacylation of mischarged Val-tRNA(Ile). The sequence is that of Isoleucine--tRNA ligase from Cytophaga hutchinsonii (strain ATCC 33406 / DSM 1761 / CIP 103989 / NBRC 15051 / NCIMB 9469 / D465).